The primary structure comprises 184 residues: Oligoribonuclease (184 aa).

The Exonuclease domain occupies 8-171 (LIWIDLEMTG…DDIRESIAEL (164 aa)). The active site involves Y129.

It belongs to the oligoribonuclease family.

The protein localises to the cytoplasm. Its function is as follows. 3'-to-5' exoribonuclease specific for small oligoribonucleotides. The chain is Oligoribonuclease from Pasteurella multocida (strain Pm70).